Here is a 229-residue protein sequence, read N- to C-terminus: 7-cyano-7-deazaguanine synthase (229 aa).

15–25 (LSGGLDSTTCL) is an ATP binding site. 4 residues coordinate Zn(2+): C192, C202, C205, and C208.

Belongs to the QueC family. Zn(2+) serves as cofactor.

The enzyme catalyses 7-carboxy-7-deazaguanine + NH4(+) + ATP = 7-cyano-7-deazaguanine + ADP + phosphate + H2O + H(+). It participates in purine metabolism; 7-cyano-7-deazaguanine biosynthesis. Its function is as follows. Catalyzes the ATP-dependent conversion of 7-carboxy-7-deazaguanine (CDG) to 7-cyano-7-deazaguanine (preQ(0)). The sequence is that of 7-cyano-7-deazaguanine synthase from Acinetobacter baylyi (strain ATCC 33305 / BD413 / ADP1).